Reading from the N-terminus, the 269-residue chain is HTH-type transcriptional regulator Rv0792c (269 aa).

Residues 20–88 (VPASTQLAEA…QGLGTFVADP (69 aa)) form the HTH gntR-type domain. The H-T-H motif DNA-binding region spans 48 to 67 (ERELIDRSGLSRVTVRAAVG).

As to quaternary structure, homodimer.

With respect to regulation, DNA-binding activity is increased in the presence of L-arabinose and inhibited by the small molecule I-OMe-Tyrphostin. Transcriptional regulator required for survival in oxidative stress and for establishing infection in host tissues. Regulates the expression of a subset of genes involved in oxidative stress adaptation and virulence, enabling the bacteria to adapt and persist in host tissues. This is HTH-type transcriptional regulator Rv0792c from Mycobacterium tuberculosis (strain ATCC 25618 / H37Rv).